Reading from the N-terminus, the 246-residue chain is Homeobox protein SIX6 (246 aa).

Residues 126-186 (WDGEQKTHCF…KNRRQRDRAA (61 aa)) constitute a DNA-binding region (homeobox). The tract at residues 190-246 (NRLQQQVLSQGPGRVLRSEGEGTPEVLGVASSPAASLSSKAATSAISITSSDSECDI) is disordered. Thr212 is subject to Phosphothreonine. Positions 219-246 (ASSPAASLSSKAATSAISITSSDSECDI) are enriched in low complexity. Residues Ser221, Ser225, Ser227, and Ser228 each carry the phosphoserine modification.

It belongs to the SIX/Sine oculis homeobox family. As to quaternary structure, interacts with TLE4 and TLE5. In terms of tissue distribution, in the developing embryo, expressed mainly in the ventral optic stalk, optic chiasma, the neural retina and the primordial tissues that give rise to the pituitary/hypothalamus axis. Not expressed in the lens placode.

It is found in the nucleus. In terms of biological role, may be involved in eye development. The polypeptide is Homeobox protein SIX6 (Six6) (Mus musculus (Mouse)).